The following is a 299-amino-acid chain: Tyrosine recombinase XerD (299 aa).

One can recognise a Core-binding (CB) domain in the interval 3–88 (QQDNPLIEQF…AMRRLFQYLY (86 aa)). The Tyr recombinase domain maps to 109–293 (RLPKDLSEAQ…ATERLRQLHQ (185 aa)). Active-site residues include Arg149, Lys173, His245, Arg248, and His271. The O-(3'-phospho-DNA)-tyrosine intermediate role is filled by Tyr280.

This sequence belongs to the 'phage' integrase family. XerD subfamily. As to quaternary structure, forms a cyclic heterotetrameric complex composed of two molecules of XerC and two molecules of XerD, in which XerC interacts with XerD via its C-terminal region, XerD interacts with XerC via its C-terminal region and so on.

The protein localises to the cytoplasm. Its activity is regulated as follows. FtsK may regulate the catalytic switch between XerC and XerD in the heterotetrameric complex during the two steps of the recombination process. Functionally, site-specific tyrosine recombinase, which acts by catalyzing the cutting and rejoining of the recombining DNA molecules. Binds cooperatively to specific DNA consensus sequences that are separated from XerC binding sites by a short central region, forming the heterotetrameric XerC-XerD complex that recombines DNA substrates. The complex is essential to convert dimers of the bacterial chromosome into monomers to permit their segregation at cell division. It also contributes to the segregational stability of plasmids. In the complex XerD specifically exchanges the bottom DNA strands. This chain is Tyrosine recombinase XerD, found in Yersinia pestis.